A 509-amino-acid chain; its full sequence is tRNA-2-methylthio-N(6)-dimethylallyladenosine synthase (509 aa).

A compositionally biased stretch (polar residues) spans 1-15 (MNEQQRLASQQANAS). Residues 1-22 (MNEQQRLASQQANASTKKEEKD) are disordered. The region spanning 66 to 184 (RKFYIRTYGC…LPYILKDAMF (119 aa)) is the MTTase N-terminal domain. Residues C75, C111, C145, C221, C225, and C228 each contribute to the [4Fe-4S] cluster site. Residues 207–437 (RRGDIKAWVN…NELVNEFSAK (231 aa)) enclose the Radical SAM core domain. The 64-residue stretch at 440–503 (KKYEGQIVEV…TWSLNGELVE (64 aa)) folds into the TRAM domain.

Belongs to the methylthiotransferase family. MiaB subfamily. Monomer. The cofactor is [4Fe-4S] cluster.

The protein resides in the cytoplasm. It carries out the reaction N(6)-dimethylallyladenosine(37) in tRNA + (sulfur carrier)-SH + AH2 + 2 S-adenosyl-L-methionine = 2-methylsulfanyl-N(6)-dimethylallyladenosine(37) in tRNA + (sulfur carrier)-H + 5'-deoxyadenosine + L-methionine + A + S-adenosyl-L-homocysteine + 2 H(+). In terms of biological role, catalyzes the methylthiolation of N6-(dimethylallyl)adenosine (i(6)A), leading to the formation of 2-methylthio-N6-(dimethylallyl)adenosine (ms(2)i(6)A) at position 37 in tRNAs that read codons beginning with uridine. In Bacillus cytotoxicus (strain DSM 22905 / CIP 110041 / 391-98 / NVH 391-98), this protein is tRNA-2-methylthio-N(6)-dimethylallyladenosine synthase.